The following is a 562-amino-acid chain: ATP synthase subunit beta, mitochondrial (562 aa).

Composition is skewed to low complexity over residues 1 to 13 (MASRRLLSSLLRS) and 20 to 40 (SKSPISNINPKLSSSSPSSKS). Disordered stretches follow at residues 1–43 (MASR…SRAS) and 58–83 (SAAAAAPPQPPPAKPEGGKGGGKITD). The N-terminal 55 residues, 1–55 (MASRRLLSSLLRSSSRRSVSKSPISNINPKLSSSSPSSKSRASPYGYLLTRAAEY), are a transit peptide targeting the mitochondrion. 237–244 (GGAGVGKT) is a binding site for ATP.

The protein belongs to the ATPase alpha/beta chains family. In terms of assembly, F-type ATPases have 2 components, CF(1) - the catalytic core - and CF(0) - the membrane proton channel. CF(1) has five subunits: alpha(3), beta(3), gamma(1), delta(1), epsilon(1). CF(0) has three main subunits: a, b and c.

The protein resides in the mitochondrion. It is found in the mitochondrion inner membrane. It carries out the reaction ATP + H2O + 4 H(+)(in) = ADP + phosphate + 5 H(+)(out). Mitochondrial membrane ATP synthase (F(1)F(0) ATP synthase or Complex V) produces ATP from ADP in the presence of a proton gradient across the membrane which is generated by electron transport complexes of the respiratory chain. F-type ATPases consist of two structural domains, F(1) - containing the extramembraneous catalytic core, and F(0) - containing the membrane proton channel, linked together by a central stalk and a peripheral stalk. During catalysis, ATP synthesis in the catalytic domain of F(1) is coupled via a rotary mechanism of the central stalk subunits to proton translocation. Subunits alpha and beta form the catalytic core in F(1). Rotation of the central stalk against the surrounding alpha(3)beta(3) subunits leads to hydrolysis of ATP in three separate catalytic sites on the beta subunits. This chain is ATP synthase subunit beta, mitochondrial (ATPB), found in Hevea brasiliensis (Para rubber tree).